A 186-amino-acid chain; its full sequence is Tegument protein UL55 (186 aa).

This sequence belongs to the alphaherpesvirinae HHV-1 UL55 family.

The protein localises to the virion tegument. The protein resides in the host nucleus matrix. The sequence is that of Tegument protein UL55 from Human herpesvirus 2 (strain HG52) (HHV-2).